A 382-amino-acid chain; its full sequence is Heme A synthase (382 aa).

The next 8 membrane-spanning stretches (helical) occupy residues 25-45 (GAVR…VAVG), 112-132 (LLGR…WARG), 141-161 (GLLG…IMVA), 176-196 (LALH…LAAG), 211-231 (VVAC…GLVA), 270-290 (LALV…VAIA), 303-323 (AAAG…GLGI), and 327-347 (LLHV…AVLI). His-277 is a heme binding site. Residue His-338 coordinates heme.

Belongs to the COX15/CtaA family. Type 2 subfamily. As to quaternary structure, interacts with CtaB. Heme b serves as cofactor.

Its subcellular location is the cell membrane. The catalysed reaction is Fe(II)-heme o + 2 A + H2O = Fe(II)-heme a + 2 AH2. Its pathway is porphyrin-containing compound metabolism; heme A biosynthesis; heme A from heme O: step 1/1. Its function is as follows. Catalyzes the conversion of heme O to heme A by two successive hydroxylations of the methyl group at C8. The first hydroxylation forms heme I, the second hydroxylation results in an unstable dihydroxymethyl group, which spontaneously dehydrates, resulting in the formyl group of heme A. The protein is Heme A synthase of Methylorubrum extorquens (strain CM4 / NCIMB 13688) (Methylobacterium extorquens).